The chain runs to 238 residues: Ribonuclease PH (238 aa).

Phosphate contacts are provided by residues Arg-86 and 124–126; that span reads GTR.

It belongs to the RNase PH family. As to quaternary structure, homohexameric ring arranged as a trimer of dimers.

The enzyme catalyses tRNA(n+1) + phosphate = tRNA(n) + a ribonucleoside 5'-diphosphate. Functionally, phosphorolytic 3'-5' exoribonuclease that plays an important role in tRNA 3'-end maturation. Removes nucleotide residues following the 3'-CCA terminus of tRNAs; can also add nucleotides to the ends of RNA molecules by using nucleoside diphosphates as substrates, but this may not be physiologically important. Probably plays a role in initiation of 16S rRNA degradation (leading to ribosome degradation) during starvation. This is Ribonuclease PH from Chelativorans sp. (strain BNC1).